A 348-amino-acid chain; its full sequence is Holliday junction branch migration complex subunit RuvB (348 aa).

A disordered region spans residues 1–20 (MKPPARMVSPERRSDDVGDT). The tract at residues 1-183 (MKPPARMVSP…FGIPIRLNFY (183 aa)) is large ATPase domain (RuvB-L). ATP is bound by residues Leu22, Arg23, Gly64, Lys67, Thr68, Thr69, 130–132 (EDF), Arg173, Tyr183, and Arg220. Mg(2+) is bound at residue Thr68. Positions 184 to 254 (TVEELEGIVT…IADHALSALE (71 aa)) are small ATPAse domain (RuvB-S). The interval 257–348 (AAGLDAMDRR…QIGLFGNDDD (92 aa)) is head domain (RuvB-H). 3 residues coordinate DNA: Arg293, Arg312, and Arg317.

Belongs to the RuvB family. In terms of assembly, homohexamer. Forms an RuvA(8)-RuvB(12)-Holliday junction (HJ) complex. HJ DNA is sandwiched between 2 RuvA tetramers; dsDNA enters through RuvA and exits via RuvB. An RuvB hexamer assembles on each DNA strand where it exits the tetramer. Each RuvB hexamer is contacted by two RuvA subunits (via domain III) on 2 adjacent RuvB subunits; this complex drives branch migration. In the full resolvosome a probable DNA-RuvA(4)-RuvB(12)-RuvC(2) complex forms which resolves the HJ.

The protein resides in the cytoplasm. The enzyme catalyses ATP + H2O = ADP + phosphate + H(+). Its function is as follows. The RuvA-RuvB-RuvC complex processes Holliday junction (HJ) DNA during genetic recombination and DNA repair, while the RuvA-RuvB complex plays an important role in the rescue of blocked DNA replication forks via replication fork reversal (RFR). RuvA specifically binds to HJ cruciform DNA, conferring on it an open structure. The RuvB hexamer acts as an ATP-dependent pump, pulling dsDNA into and through the RuvAB complex. RuvB forms 2 homohexamers on either side of HJ DNA bound by 1 or 2 RuvA tetramers; 4 subunits per hexamer contact DNA at a time. Coordinated motions by a converter formed by DNA-disengaged RuvB subunits stimulates ATP hydrolysis and nucleotide exchange. Immobilization of the converter enables RuvB to convert the ATP-contained energy into a lever motion, pulling 2 nucleotides of DNA out of the RuvA tetramer per ATP hydrolyzed, thus driving DNA branch migration. The RuvB motors rotate together with the DNA substrate, which together with the progressing nucleotide cycle form the mechanistic basis for DNA recombination by continuous HJ branch migration. Branch migration allows RuvC to scan DNA until it finds its consensus sequence, where it cleaves and resolves cruciform DNA. The polypeptide is Holliday junction branch migration complex subunit RuvB (Bradyrhizobium sp. (strain ORS 278)).